Reading from the N-terminus, the 191-residue chain is Cell number regulator 1 (191 aa).

Residues 13 to 44 (FSAGAPPTAPPPPAAYHQQQQQHGANMDTSRP) are disordered. The segment covering 27–37 (AYHQQQQQHGA) has biased composition (low complexity). A helical membrane pass occupies residues 91–113 (IASGLVYGLICASTGMGCLYSCL).

Belongs to the cornifelin family. In terms of tissue distribution, expressed in roots, coleoptiles, stalks and silks. Detected in leaves, apical meristems, immature ears and pericarps. Highest expression in coleoptiles and silks.

Its subcellular location is the membrane. In terms of biological role, acts as a negative regulator of cell number. This Zea mays (Maize) protein is Cell number regulator 1 (CNR1).